The following is a 414-amino-acid chain: Isocitrate dehydrogenase [NADP] cytoplasmic (414 aa).

The residue at position 2 (Ser-2) is an N-acetylserine. Tyr-42 bears the Phosphotyrosine mark. Residue 75–77 coordinates NADP(+); the sequence is TIT. Thr-77 is a substrate binding site. Lys-81 carries the N6-acetyllysine modification. An NADP(+)-binding site is contributed by Arg-82. Residues 94–100 and Arg-109 each bind substrate; that span reads SPNGTIR. N6-succinyllysine is present on Lys-126. Substrate contacts are provided by Arg-132 and Lys-212. N6-acetyllysine is present on residues Lys-224 and Lys-233. Asp-252 contributes to the Mn(2+) binding site. NADP(+) is bound at residue Lys-260. Residues Asp-275 and Asp-279 each contribute to the Mn(2+) site. Position 310–315 (310–315) interacts with NADP(+); the sequence is GTVTRH. At Lys-321 the chain carries N6-acetyllysine. NADP(+) is bound at residue Asn-328. Position 389 is a phosphoserine (Ser-389). Lys-400 carries the N6-succinyllysine modification.

The protein belongs to the isocitrate and isopropylmalate dehydrogenases family. As to quaternary structure, homodimer. Mg(2+) serves as cofactor. Requires Mn(2+) as cofactor. Post-translationally, acetylation at Lys-374 dramatically reduces catalytic activity.

It localises to the cytoplasm. It is found in the cytosol. It catalyses the reaction D-threo-isocitrate + NADP(+) = 2-oxoglutarate + CO2 + NADPH. In terms of biological role, catalyzes the NADP(+)-dependent oxidative decarboxylation of isocitrate (D-threo-isocitrate) to 2-ketoglutarate (2-oxoglutarate), which is required by other enzymes such as the phytanoyl-CoA dioxygenase. Plays a critical role in the generation of NADPH, an important cofactor in many biosynthesis pathways. May act as a corneal epithelial crystallin and may be involved in maintaining corneal epithelial transparency. The polypeptide is Isocitrate dehydrogenase [NADP] cytoplasmic (IDH1) (Ovis aries (Sheep)).